A 374-amino-acid polypeptide reads, in one-letter code: uncharacterized protein (374 aa).

The interval 197-223 (GTTTTTNNNNNNNNNNNNNNNNGTNIT) is disordered. The segment covering 198–223 (TTTTTNNNNNNNNNNNNNNNNGTNIT) has biased composition (low complexity). Residues 302–342 (DEVSDCNDINTNLKKKRKQQEQLQIEKEKKLLTIQQEQTKI) adopt a coiled-coil conformation.

This is an uncharacterized protein from Dictyostelium discoideum (Social amoeba).